The sequence spans 389 residues: Na(+)/H(+) antiporter NhaA (389 aa).

Transmembrane regions (helical) follow at residues 17 to 37, 59 to 79, 95 to 115, 124 to 144, 154 to 174, 177 to 197, 213 to 233, 261 to 281, 287 to 307, 328 to 348, and 363 to 383; these read ILLL…LAGL, LLLW…GLEV, SLPT…YLLF, AGWA…MALL, VFLL…IALF, TDLS…LVAL, LVLW…GVII, FLIL…NMSL, PVPV…VMLF, IAPV…IASL, and LGTL…LSKV.

The protein belongs to the NhaA Na(+)/H(+) (TC 2.A.33) antiporter family.

It is found in the cell inner membrane. It carries out the reaction Na(+)(in) + 2 H(+)(out) = Na(+)(out) + 2 H(+)(in). Na(+)/H(+) antiporter that extrudes sodium in exchange for external protons. The polypeptide is Na(+)/H(+) antiporter NhaA (Shewanella sp. (strain MR-7)).